A 260-amino-acid polypeptide reads, in one-letter code: Sperm microtubule inner protein 6 (260 aa).

It belongs to the SPMIP6 family. As to quaternary structure, microtubule inner protein component of sperm flagellar doublet microtubules. Interacts with alpha-tubulin. In terms of tissue distribution, testis-specific, expressed exclusively in germ cells (at protein level). Testis-specific. As to expression, expressed in both lung and testis.

The protein resides in the cytoplasm. The protein localises to the cytoskeleton. It localises to the nucleus. Its subcellular location is the mitochondrion. It is found in the flagellum axoneme. Its function is as follows. May participate in intramanchette transport and midpiece formation of the sperm tail. May play a potential role in somatic cell proliferation. The sequence is that of Sperm microtubule inner protein 6 (SPMIP6) from Mus musculus (Mouse).